Reading from the N-terminus, the 453-residue chain is Formimidoylglutamate deiminase (453 aa).

Positions 56 and 58 each coordinate Zn(2+). The N-formimidoyl-L-glutamate site is built by glutamine 61, arginine 82, tyrosine 121, histidine 206, and arginine 209. Histidine 232 contacts Zn(2+). Glutamate 235 is an N-formimidoyl-L-glutamate binding site. Active-site proton acceptor residues include histidine 269 and aspartate 320. Aspartate 320 is a binding site for Zn(2+).

This sequence belongs to the metallo-dependent hydrolases superfamily. As to quaternary structure, homodimer. Zn(2+) is required as a cofactor.

The enzyme catalyses N-formimidoyl-L-glutamate + H2O = N-formyl-L-glutamate + NH4(+). The protein operates within amino-acid degradation; L-histidine degradation into L-glutamate; L-glutamate from N-formimidoyl-L-glutamate (deiminase route): step 1/2. With respect to regulation, inhibited by the metal chelator dipicolinate. Inhibited by N-formimino-L-aspartate and N-guanidino-L-glutaric acid. In terms of biological role, catalyzes the hydrolysis of N-formimino-L-glutamate to N-formyl-L-glutamate and ammonia. This Pseudomonas aeruginosa (strain ATCC 15692 / DSM 22644 / CIP 104116 / JCM 14847 / LMG 12228 / 1C / PRS 101 / PAO1) protein is Formimidoylglutamate deiminase.